A 117-amino-acid chain; its full sequence is UPF0145 protein CV_4322 (117 aa).

The protein belongs to the UPF0145 family.

This is UPF0145 protein CV_4322 from Chromobacterium violaceum (strain ATCC 12472 / DSM 30191 / JCM 1249 / CCUG 213 / NBRC 12614 / NCIMB 9131 / NCTC 9757 / MK).